Reading from the N-terminus, the 284-residue chain is L-ribulose-5-phosphate 3-epimerase UlaE (284 aa).

Belongs to the L-ribulose-5-phosphate 3-epimerase family.

The enzyme catalyses L-ribulose 5-phosphate = L-xylulose 5-phosphate. Its pathway is cofactor degradation; L-ascorbate degradation; D-xylulose 5-phosphate from L-ascorbate: step 3/4. Its function is as follows. Catalyzes the isomerization of L-xylulose-5-phosphate to L-ribulose-5-phosphate. Is involved in the anaerobic L-ascorbate utilization. In Salmonella dublin (strain CT_02021853), this protein is L-ribulose-5-phosphate 3-epimerase UlaE.